The chain runs to 671 residues: DNA ligase (671 aa).

NAD(+) contacts are provided by residues 32 to 36 (DAEYD), 81 to 82 (SL), and glutamate 113. Lysine 115 acts as the N6-AMP-lysine intermediate in catalysis. NAD(+) contacts are provided by arginine 136, glutamate 173, lysine 290, and lysine 314. Residues cysteine 408, cysteine 411, cysteine 426, and cysteine 432 each coordinate Zn(2+). The BRCT domain maps to 593-671 (EIDSPFAGKT…ETEMLRLLGS (79 aa)).

This sequence belongs to the NAD-dependent DNA ligase family. LigA subfamily. Mg(2+) serves as cofactor. The cofactor is Mn(2+).

It carries out the reaction NAD(+) + (deoxyribonucleotide)n-3'-hydroxyl + 5'-phospho-(deoxyribonucleotide)m = (deoxyribonucleotide)n+m + AMP + beta-nicotinamide D-nucleotide.. Functionally, DNA ligase that catalyzes the formation of phosphodiester linkages between 5'-phosphoryl and 3'-hydroxyl groups in double-stranded DNA using NAD as a coenzyme and as the energy source for the reaction. It is essential for DNA replication and repair of damaged DNA. The chain is DNA ligase from Escherichia coli O81 (strain ED1a).